A 207-amino-acid polypeptide reads, in one-letter code: Octanoyltransferase (207 aa).

Residues 27-203 (ADTEDELWVV…HLETQFTPKA (177 aa)) enclose the BPL/LPL catalytic domain. Substrate contacts are provided by residues 66-73 (RGGQITYH), 133-135 (SLG), and 146-148 (GLA). Cysteine 164 serves as the catalytic Acyl-thioester intermediate.

The protein belongs to the LipB family.

It is found in the cytoplasm. It carries out the reaction octanoyl-[ACP] + L-lysyl-[protein] = N(6)-octanoyl-L-lysyl-[protein] + holo-[ACP] + H(+). Its pathway is protein modification; protein lipoylation via endogenous pathway; protein N(6)-(lipoyl)lysine from octanoyl-[acyl-carrier-protein]: step 1/2. Catalyzes the transfer of endogenously produced octanoic acid from octanoyl-acyl-carrier-protein onto the lipoyl domains of lipoate-dependent enzymes. Lipoyl-ACP can also act as a substrate although octanoyl-ACP is likely to be the physiological substrate. The protein is Octanoyltransferase of Neisseria meningitidis serogroup A / serotype 4A (strain DSM 15465 / Z2491).